A 350-amino-acid chain; its full sequence is UDP-3-O-acylglucosamine N-acyltransferase (350 aa).

His240 (proton acceptor) is an active-site residue.

The protein belongs to the transferase hexapeptide repeat family. LpxD subfamily. Homotrimer.

The enzyme catalyses a UDP-3-O-[(3R)-3-hydroxyacyl]-alpha-D-glucosamine + a (3R)-hydroxyacyl-[ACP] = a UDP-2-N,3-O-bis[(3R)-3-hydroxyacyl]-alpha-D-glucosamine + holo-[ACP] + H(+). It functions in the pathway bacterial outer membrane biogenesis; LPS lipid A biosynthesis. Its function is as follows. Catalyzes the N-acylation of UDP-3-O-acylglucosamine using 3-hydroxyacyl-ACP as the acyl donor. Is involved in the biosynthesis of lipid A, a phosphorylated glycolipid that anchors the lipopolysaccharide to the outer membrane of the cell. The sequence is that of UDP-3-O-acylglucosamine N-acyltransferase from Methylobacillus flagellatus (strain ATCC 51484 / DSM 6875 / VKM B-1610 / KT).